Reading from the N-terminus, the 480-residue chain is Glutamate--tRNA ligase (480 aa).

The short motif at 12 to 22 (PSPTGAPHLGL) is the 'HIGH' region element. Positions 255–259 (KLSKR) match the 'KMSKS' region motif. An ATP-binding site is contributed by Lys258.

Belongs to the class-I aminoacyl-tRNA synthetase family. Glutamate--tRNA ligase type 1 subfamily. As to quaternary structure, monomer.

The protein localises to the cytoplasm. It catalyses the reaction tRNA(Glu) + L-glutamate + ATP = L-glutamyl-tRNA(Glu) + AMP + diphosphate. Catalyzes the attachment of glutamate to tRNA(Glu) in a two-step reaction: glutamate is first activated by ATP to form Glu-AMP and then transferred to the acceptor end of tRNA(Glu). In Tropheryma whipplei (strain TW08/27) (Whipple's bacillus), this protein is Glutamate--tRNA ligase.